The following is a 307-amino-acid chain: Recombination-associated protein RdgC (307 aa).

Belongs to the RdgC family.

Its subcellular location is the cytoplasm. It localises to the nucleoid. Its function is as follows. May be involved in recombination. The polypeptide is Recombination-associated protein RdgC (Colwellia psychrerythraea (strain 34H / ATCC BAA-681) (Vibrio psychroerythus)).